Here is an 85-residue protein sequence, read N- to C-terminus: uncharacterized protein (85 aa).

It localises to the mitochondrion. This is an uncharacterized protein from Paramecium tetraurelia.